The chain runs to 638 residues: Threonine--tRNA ligase (638 aa).

In terms of domain architecture, TGS spans 1–61 (MPDIKLPDGS…EQNADLAIIT (61 aa)). The interval 242-533 (DHRRLGKQYD…LIENFAGALP (292 aa)) is catalytic. The Zn(2+) site is built by Cys-333, His-384, and His-510.

The protein belongs to the class-II aminoacyl-tRNA synthetase family. Homodimer. Zn(2+) is required as a cofactor.

The protein localises to the cytoplasm. It catalyses the reaction tRNA(Thr) + L-threonine + ATP = L-threonyl-tRNA(Thr) + AMP + diphosphate + H(+). Its function is as follows. Catalyzes the attachment of threonine to tRNA(Thr) in a two-step reaction: L-threonine is first activated by ATP to form Thr-AMP and then transferred to the acceptor end of tRNA(Thr). Also edits incorrectly charged L-seryl-tRNA(Thr). This Dechloromonas aromatica (strain RCB) protein is Threonine--tRNA ligase.